A 471-amino-acid chain; its full sequence is UTP--glucose-1-phosphate uridylyltransferase (471 aa).

UTP-binding positions include L87–G90, K101, Q164, and G193. Position 89–90 (G89–G90) interacts with substrate. Residues H194 and N222 to D224 each bind substrate. 2 residues coordinate UTP: D224 and K362.

This sequence belongs to the UDPGP type 1 family.

The protein localises to the cytoplasm. It catalyses the reaction alpha-D-glucose 1-phosphate + UTP + H(+) = UDP-alpha-D-glucose + diphosphate. Plays a central role as a glucosyl donor in cellular metabolic pathways. The protein is UTP--glucose-1-phosphate uridylyltransferase (UGP) of Astragalus penduliflorus (Mountain lentil).